Reading from the N-terminus, the 362-residue chain is Phosphoserine aminotransferase (362 aa).

Residue Arg-42 coordinates L-glutamate. Residues 76-77 (AR), Trp-102, Thr-154, Asp-174, and Gln-197 contribute to the pyridoxal 5'-phosphate site. Lys-198 is subject to N6-(pyridoxal phosphate)lysine. 239–240 (NT) lines the pyridoxal 5'-phosphate pocket.

It belongs to the class-V pyridoxal-phosphate-dependent aminotransferase family. SerC subfamily. In terms of assembly, homodimer. Pyridoxal 5'-phosphate serves as cofactor.

The protein localises to the cytoplasm. The enzyme catalyses O-phospho-L-serine + 2-oxoglutarate = 3-phosphooxypyruvate + L-glutamate. It carries out the reaction 4-(phosphooxy)-L-threonine + 2-oxoglutarate = (R)-3-hydroxy-2-oxo-4-phosphooxybutanoate + L-glutamate. It participates in amino-acid biosynthesis; L-serine biosynthesis; L-serine from 3-phospho-D-glycerate: step 2/3. The protein operates within cofactor biosynthesis; pyridoxine 5'-phosphate biosynthesis; pyridoxine 5'-phosphate from D-erythrose 4-phosphate: step 3/5. Functionally, catalyzes the reversible conversion of 3-phosphohydroxypyruvate to phosphoserine and of 3-hydroxy-2-oxo-4-phosphonooxybutanoate to phosphohydroxythreonine. In Buchnera aphidicola subsp. Cinara cedri (strain Cc), this protein is Phosphoserine aminotransferase.